The chain runs to 83 residues: NADH dehydrogenase [ubiquinone] iron-sulfur protein 5-B (83 aa).

One can recognise a CHCH domain in the interval 11 to 52 (KGRCYDFWMDFSECMSHCREPKDCTLLREDYLECLHHSKEFQ). Short sequence motifs (cx9C motif) lie at residues 14–24 (CYDFWMDFSEC) and 34–44 (CTLLREDYLEC). Cystine bridges form between Cys-14-Cys-44 and Cys-24-Cys-34. The tract at residues 62–83 (QRKLRAASRKGEETGDGTHTHH) is disordered.

Belongs to the complex I NDUFS5 subunit family. In terms of assembly, complex I is composed of at least 49 different subunits. This is a component of the iron-sulfur (IP) fragment of the enzyme.

The protein resides in the mitochondrion. It localises to the mitochondrion inner membrane. It is found in the mitochondrion intermembrane space. Accessory subunit of the mitochondrial membrane respiratory chain NADH dehydrogenase (Complex I), that is believed not to be involved in catalysis. Complex I functions in the transfer of electrons from NADH to the respiratory chain. The immediate electron acceptor for the enzyme is believed to be ubiquinone. In Arabidopsis thaliana (Mouse-ear cress), this protein is NADH dehydrogenase [ubiquinone] iron-sulfur protein 5-B.